A 1846-amino-acid polypeptide reads, in one-letter code: Insulin-like receptor (1846 aa).

N-linked (GlcNAc...) asparagine glycosylation is found at Asn113, Asn180, and Asn364. 5 disulfides stabilise this stretch: Cys371–Cys386, Cys393–Cys401, Cys397–Cys410, Cys413–Cys422, and Cys426–Cys438. Residue Asn453 is glycosylated (N-linked (GlcNAc...) asparagine). Disulfide bonds link Cys469-Cys483 and Cys486-Cys490. Asn518 carries N-linked (GlcNAc...) asparagine glycosylation. Cys615 and Cys646 form a disulfide bridge. N-linked (GlcNAc...) asparagine glycosylation is found at Asn652, Asn671, and Asn696. 3 Fibronectin type-III domains span residues 775–869 (TPDP…TMMG), 969–1067 (KPSS…LKRT), and 1077–1179 (LNET…TPGF). The tract at residues 944–980 (EKAENLGKAPKTLGGKKPLIHISKKKPSSSSTTSTPA) is disordered. Positions 961-970 (PLIHISKKKP) are enriched in basic residues. The Extracellular segment spans residues 970-1183 (PSSSSTTSTP…VMTPGFFTVE (214 aa)). Low complexity predominate over residues 971 to 980 (SSSSTTSTPA). 5 N-linked (GlcNAc...) asparagine glycosylation sites follow: Asn1017, Asn1047, Asn1078, Asn1087, and Asn1093. A helical membrane pass occupies residues 1184–1204 (IILGMLLVFLILMSIAGCIIY). The Cytoplasmic portion of the chain corresponds to 1205–1846 (YYIQVRYGKK…IEDNEHHPLV (642 aa)). Residues 1246-1528 (VVLGQQCGEG…LLAAEASPEF (283 aa)) enclose the Protein kinase domain. Residues 1252 to 1260 (CGEGSFGKV) and Lys1282 each bind ATP. The active-site Proton acceptor is Asp1388. Disordered regions lie at residues 1718 to 1742 (ISSM…TNWS) and 1769 to 1826 (QQQQ…IFNG). Polar residues predominate over residues 1726–1742 (STGASSSSYGVPQTNWS). The segment covering 1808–1821 (YRNNGSPSRNGNSR) has biased composition (low complexity).

The protein belongs to the protein kinase superfamily. Tyr protein kinase family. Insulin receptor subfamily. Tetramer of 2 alpha and 2 beta chains linked by disulfide bonds. The alpha chains contribute to the formation of the ligand-binding domain, while the beta chains carry the kinase domain. Interacts (via cytoplasmic domain) with shc-1 (PID domain). Interacts (via kinase domain) with daf-18 (via C-terminus). In terms of assembly, interacts with casy-1; promoting axonal localization. Mg(2+) is required as a cofactor.

Its subcellular location is the membrane. It is found in the cell projection. It localises to the axon. The enzyme catalyses L-tyrosyl-[protein] + ATP = O-phospho-L-tyrosyl-[protein] + ADP + H(+). With respect to regulation, autophosphorylation activates the kinase activity. Interaction with shc-1 may inhibit its activity. Functionally, insulin receptor-like tyrosine kinase which regulates metabolism, controls longevity and prevents developmental arrest at the dauer stage. Binding of INS family members may either stimulate, or antagonize, association of the receptor with downstream mediators such as pdk-1 and age-1. Required for germline progenitor proliferation during larval development. Plays a role in maintaining gonad integrity in a daf-16/FOXO-dependent manner. Required for the response to environmental stimuli such as light, food, pheromone, and temperature. Negatively regulates resistance to UV and oxidative stress. In a daf-16/FOXO-dependent manner, plays a role in regulating the response to white light. Role in immune function and pathogen resistance. Negatively regulates autophagy. Regulates daf-18/PTEN protein levels. Plays a role in controlling seam cell development during the larval stages. Its function is as follows. Required for taste avoidance learning in the cell body of ASER gustatory neurons. Required for taste avoidance learning in axons of ASER gustatory neurons. The polypeptide is Insulin-like receptor (Caenorhabditis elegans).